The sequence spans 274 residues: Octanoyltransferase LipM (274 aa).

The BPL/LPL catalytic domain occupies Gly31–Leu245. The active-site Acyl-thioester intermediate is Cys147.

It belongs to the octanoyltransferase LipM family. In terms of assembly, monomer.

It carries out the reaction octanoyl-[ACP] + L-lysyl-[protein] = N(6)-octanoyl-L-lysyl-[protein] + holo-[ACP] + H(+). It participates in protein modification; protein lipoylation via endogenous pathway; protein N(6)-(lipoyl)lysine from octanoyl-[acyl-carrier-protein]. Catalyzes the transfer of endogenously produced octanoic acid from octanoyl-acyl-carrier-protein onto the lipoyl domain of GcvH, an intermediate carrier during protein lipoylation. This Kyrpidia tusciae (strain DSM 2912 / NBRC 15312 / T2) (Bacillus tusciae) protein is Octanoyltransferase LipM.